The primary structure comprises 635 residues: Threonine--tRNA ligase (635 aa).

The region spanning 1 to 61 is the TGS domain; it reads MIAITLPDGS…DRDAELAIVT (61 aa). The tract at residues 242–533 is catalytic; the sequence is DHRKLGKTLD…LLENHAGALP (292 aa). 3 residues coordinate Zn(2+): Cys333, His384, and His510.

Belongs to the class-II aminoacyl-tRNA synthetase family. Homodimer. It depends on Zn(2+) as a cofactor.

The protein localises to the cytoplasm. It carries out the reaction tRNA(Thr) + L-threonine + ATP = L-threonyl-tRNA(Thr) + AMP + diphosphate + H(+). Its function is as follows. Catalyzes the attachment of threonine to tRNA(Thr) in a two-step reaction: L-threonine is first activated by ATP to form Thr-AMP and then transferred to the acceptor end of tRNA(Thr). Also edits incorrectly charged L-seryl-tRNA(Thr). This Cupriavidus necator (strain ATCC 17699 / DSM 428 / KCTC 22496 / NCIMB 10442 / H16 / Stanier 337) (Ralstonia eutropha) protein is Threonine--tRNA ligase.